The primary structure comprises 459 residues: tRNA modification GTPase MnmE (459 aa).

The (6S)-5-formyl-5,6,7,8-tetrahydrofolate site is built by arginine 20, glutamate 85, and arginine 124. A TrmE-type G domain is found at 221 to 380 (GLSTVIIGRP…LEEAIQSLFY (160 aa)). Residue asparagine 231 coordinates K(+). Residues 231-236 (NVGKSS), 250-256 (TDIPGTT), and 275-278 (DTAG) contribute to the GTP site. Serine 235 contributes to the Mg(2+) binding site. Positions 250, 252, and 255 each coordinate K(+). Threonine 256 is a Mg(2+) binding site. (6S)-5-formyl-5,6,7,8-tetrahydrofolate is bound at residue lysine 459.

It belongs to the TRAFAC class TrmE-Era-EngA-EngB-Septin-like GTPase superfamily. TrmE GTPase family. As to quaternary structure, homodimer. Heterotetramer of two MnmE and two MnmG subunits. The cofactor is K(+).

It localises to the cytoplasm. In terms of biological role, exhibits a very high intrinsic GTPase hydrolysis rate. Involved in the addition of a carboxymethylaminomethyl (cmnm) group at the wobble position (U34) of certain tRNAs, forming tRNA-cmnm(5)s(2)U34. The sequence is that of tRNA modification GTPase MnmE from Bacillus subtilis (strain 168).